We begin with the raw amino-acid sequence, 288 residues long: Homoserine kinase (288 aa).

79–89 lines the ATP pocket; the sequence is PLARGLGSSSS.

Belongs to the GHMP kinase family. Homoserine kinase subfamily.

The protein resides in the cytoplasm. The enzyme catalyses L-homoserine + ATP = O-phospho-L-homoserine + ADP + H(+). The protein operates within amino-acid biosynthesis; L-threonine biosynthesis; L-threonine from L-aspartate: step 4/5. Functionally, catalyzes the ATP-dependent phosphorylation of L-homoserine to L-homoserine phosphate. The sequence is that of Homoserine kinase from Streptococcus sanguinis (strain SK36).